Reading from the N-terminus, the 928-residue chain is Type II inositol 3,4-bisphosphate 4-phosphatase (928 aa).

The segment covering 1–13 (MEIKEEGTSEEGQ) has biased composition (basic and acidic residues). 3 disordered regions span residues 1 to 23 (MEIK…QAND), 481 to 516 (ILRK…HHSD), and 548 to 575 (SRND…LTSH). Positions 23–165 (DPEDIQFTSI…LKSKEQLLSL (143 aa)) constitute a C2 domain. Composition is skewed to basic and acidic residues over residues 506 to 516 (RRQDSIPHHSD) and 548 to 563 (SRND…KDGD).

It belongs to the inositol 3,4-bisphosphate 4-phosphatase family.

The enzyme catalyses a 1,2-diacyl-sn-glycero-3-phospho-(1D-myo-inositol-3,4-bisphosphate) + H2O = a 1,2-diacyl-sn-glycero-3-phospho-(1D-myo-inositol-3-phosphate) + phosphate. It carries out the reaction 1D-myo-inositol 3,4-bisphosphate + H2O = 1D-myo-inositol 3-phosphate + phosphate. The catalysed reaction is 1D-myo-inositol 1,3,4-trisphosphate + H2O = 1D-myo-inositol 1,3-bisphosphate + phosphate. It functions in the pathway signal transduction; phosphatidylinositol signaling pathway. Its activity is regulated as follows. Strongly inhibited by inositol hexakisphosphate. Catalyzes the hydrolysis of the 4-position phosphate of phosphatidylinositol 3,4-bisphosphate, inositol 1,3,4-trisphosphate and inositol 3,4-bisphosphate. Plays a role in the late stages of macropinocytosis by dephosphorylating phosphatidylinositol 3,4-bisphosphate in membrane ruffles. The lipid phosphatase activity is critical for tumor suppressor function. Antagonizes the PI3K-AKT/PKB signaling pathway by dephosphorylating phosphoinositides and thereby modulating cell cycle progression and cell survival. In Rattus norvegicus (Rat), this protein is Type II inositol 3,4-bisphosphate 4-phosphatase (Inpp4b).